The sequence spans 401 residues: SSWWAHVEMGPPDPILGVTEAYKRDTNSKKMNLGVGAYRDDNGKPYVLPSVRKAEAQIAAKNLDKEYLPIGGLAEFCKASAELALGENSEALKSGRYVTVQSISGTGALRIGANFLQRFFKFSRDVFLPKPSWGNHTPIFRDAGLQLHAYRYYDPKTCGFDVTGALEDISKIPQQSIILLHACAHNPTGVDPRPEQWKEIATLVKKNNLFAFFDMAYQGFASGDGNKDAWAVRYFIEQGINVCLCQSYAKNMGLYGERVGAFTMVCKDADEAKRVESQLKILIRPLYSNPPLNGARIASTILTSPDLRKQWLQEVKGMADRIISMRTQLVSNLKKEGSSHSWQHIADQIGMFCFTGLKPEQVERLTKEFSIYMTKDGRISVAGVTSGNVGYLAHAIHQVTK.

Threonine 19 is modified (phosphothreonine). N6-acetyllysine is present on lysine 30. Glycine 36 lines the substrate pocket. At lysine 44 the chain carries N6-acetyllysine; alternate. Residue lysine 44 is modified to N6-succinyllysine; alternate. An N6-acetyllysine modification is found at lysine 53. An N6-acetyllysine; alternate modification is found at lysine 61. An N6-succinyllysine; alternate modification is found at lysine 61. A 3'-nitrotyrosine; alternate modification is found at tyrosine 67. Tyrosine 67 is modified (phosphotyrosine; alternate). An N6-acetyllysine; alternate mark is found at lysine 78, lysine 93, and lysine 130. N6-succinyllysine; alternate is present on residues lysine 78, lysine 93, and lysine 130. Tryptophan 133 contacts substrate. Lysine 156 bears the N6-acetyllysine; alternate mark. Lysine 156 carries the post-translational modification N6-succinyllysine; alternate. Substrate is bound at residue asparagine 186. N6-succinyllysine is present on lysine 198. Position 205 is an N6-acetyllysine (lysine 205). An N6-acetyllysine; alternate mark is found at lysine 250 and lysine 267. Residue lysine 250 is modified to N6-(pyridoxal phosphate)lysine; alternate. Lysine 267 carries the N6-succinyllysine; alternate modification. Lysine 273 carries the post-translational modification N6-acetyllysine. Lysine 280 is subject to N6-acetyllysine; alternate. N6-succinyllysine; alternate is present on lysine 280. Asymmetric dimethylarginine is present on arginine 284. Residue lysine 309 is modified to N6-acetyllysine; alternate. At lysine 309 the chain carries N6-succinyllysine; alternate. The residue at position 316 (lysine 316) is an N6-acetyllysine. Lysine 334 is modified (N6-acetyllysine; alternate). Lysine 334 is modified (N6-succinyllysine; alternate). N6-acetyllysine occurs at positions 335 and 358. 2 positions are modified to N6-acetyllysine; alternate: lysine 367 and lysine 375. An N6-succinyllysine; alternate mark is found at lysine 367 and lysine 375. Position 378 (arginine 378) interacts with substrate.

Belongs to the class-I pyridoxal-phosphate-dependent aminotransferase family. In terms of assembly, homodimer. Pyridoxal 5'-phosphate is required as a cofactor.

The protein localises to the mitochondrion matrix. It localises to the cell membrane. The enzyme catalyses L-aspartate + 2-oxoglutarate = oxaloacetate + L-glutamate. It catalyses the reaction L-kynurenine + 2-oxoglutarate = kynurenate + L-glutamate + H2O. In terms of biological role, catalyzes the irreversible transamination of the L-tryptophan metabolite L-kynurenine to form kynurenic acid (KA). As a member of the malate-aspartate shuttle, it has a key role in the intracellular NAD(H) redox balance. Is important for metabolite exchange between mitochondria and cytosol, and for amino acid metabolism. Facilitates cellular uptake of long-chain free fatty acids. The polypeptide is Aspartate aminotransferase, mitochondrial (GOT2) (Equus caballus (Horse)).